The following is a 1386-amino-acid chain: DNA-directed RNA polymerase subunit beta'' (1386 aa).

Zn(2+) is bound by residues cysteine 224, cysteine 294, cysteine 301, and cysteine 304.

This sequence belongs to the RNA polymerase beta' chain family. RpoC2 subfamily. In plastids the minimal PEP RNA polymerase catalytic core is composed of four subunits: alpha, beta, beta', and beta''. When a (nuclear-encoded) sigma factor is associated with the core the holoenzyme is formed, which can initiate transcription. The cofactor is Zn(2+).

The protein localises to the plastid. It is found in the chloroplast. It catalyses the reaction RNA(n) + a ribonucleoside 5'-triphosphate = RNA(n+1) + diphosphate. In terms of biological role, DNA-dependent RNA polymerase catalyzes the transcription of DNA into RNA using the four ribonucleoside triphosphates as substrates. The sequence is that of DNA-directed RNA polymerase subunit beta'' from Acorus calamus (Sweet flag).